We begin with the raw amino-acid sequence, 1058 residues long: Protein argonaute MEL1 (1058 aa).

Gly residues-rich tracts occupy residues 1 to 12 (MAYRGGGRGGRG) and 24 to 37 (DVPG…GGGA). Disordered stretches follow at residues 1-77 (MAYR…YGAP) and 115-147 (RAPP…PSAT). The span at 48 to 70 (WPPPGMTPRPGPPQPQYPRPGPP) shows a compositional bias: pro residues. Positions 121–147 (HSSAPAPYQPAAAAPAPSSSSTAPSAT) are enriched in low complexity. Positions 407–520 (TVIQFVEEFL…LPMEVCKIVE (114 aa)) constitute a PAZ domain. Positions 696 to 1016 (LLIVILPEVS…AAFRARYYVE (321 aa)) constitute a Piwi domain.

This sequence belongs to the argonaute family. Ago subfamily.

It localises to the nucleus. It is found in the nucleolus. Essential for the progression of premeiotic mitosis and meiosis during sporogenesis. Regulates the cell division of premeiotic germ cells, the proper modification of meiotic chromosomes, and the faithful progression of meiosis, probably via small RNA-mediated gene silencing. May be involved in histone H3 'Lys-9' demethylation in the pericentromeric region. This Oryza sativa subsp. japonica (Rice) protein is Protein argonaute MEL1 (MEL1).